We begin with the raw amino-acid sequence, 125 residues long: Probable endoribonuclease HigB1 (125 aa).

It belongs to the mycobacterial HigB family.

Toxic component of an atypical, type II toxin-antitoxin chaperone (TAC) system. Probably an endoribonuclease, neutralized by its cognate antitoxin HigA which also requires SecB-like chaperone MT2006 (AC Q7D7P7). This is Probable endoribonuclease HigB1 from Mycobacterium tuberculosis (strain CDC 1551 / Oshkosh).